We begin with the raw amino-acid sequence, 503 residues long: Probable cytosol aminopeptidase (503 aa).

Positions 270 and 275 each coordinate Mn(2+). Lys-282 is a catalytic residue. Mn(2+) is bound by residues Asp-293, Asp-352, and Glu-354. Arg-356 is an active-site residue.

The protein belongs to the peptidase M17 family. Requires Mn(2+) as cofactor.

It is found in the cytoplasm. The enzyme catalyses Release of an N-terminal amino acid, Xaa-|-Yaa-, in which Xaa is preferably Leu, but may be other amino acids including Pro although not Arg or Lys, and Yaa may be Pro. Amino acid amides and methyl esters are also readily hydrolyzed, but rates on arylamides are exceedingly low.. It catalyses the reaction Release of an N-terminal amino acid, preferentially leucine, but not glutamic or aspartic acids.. Functionally, presumably involved in the processing and regular turnover of intracellular proteins. Catalyzes the removal of unsubstituted N-terminal amino acids from various peptides. In Yersinia enterocolitica serotype O:8 / biotype 1B (strain NCTC 13174 / 8081), this protein is Probable cytosol aminopeptidase.